Reading from the N-terminus, the 378-residue chain is Monomethylxanthine methyltransferase 1 (378 aa).

Residues tyrosine 18, cysteine 61, asparagine 66, aspartate 100, leucine 101, serine 139, phenylalanine 140, and cysteine 156 each coordinate S-adenosyl-L-homocysteine. Positions 157, 160, and 161 each coordinate theobromine. Mg(2+) contacts are provided by asparagine 178, aspartate 260, phenylalanine 262, and asparagine 263. Theobromine is bound at residue tyrosine 362.

It belongs to the methyltransferase superfamily. Type-7 methyltransferase family. Mg(2+) serves as cofactor. As to expression, expressed, at low levels, in stems, young leaves, floral buds and immature fruits (grains), but not in roots, old leaves and mature fruits.

The protein resides in the cytoplasm. The catalysed reaction is 7-methylxanthine + S-adenosyl-L-methionine = theobromine + S-adenosyl-L-homocysteine + H(+). It participates in alkaloid biosynthesis. In terms of biological role, involved in the biosynthesis of caffeine. Catalyzes the conversion of 7-methylxanthine (7mX) to theobromine and of paraxanthine to caffeine. Has a 5-fold preference for 7mX. The polypeptide is Monomethylxanthine methyltransferase 1 (Coffea arabica (Arabian coffee)).